Consider the following 339-residue polypeptide: Probable geranylgeranyl transferase type-2 subunit beta (339 aa).

PFTB repeat units follow at residues 24–65, 72–113, 120–161, 168–209, 216–257, and 264–306; these read IDKH…YLLK, KNEV…IQYD, INSV…SLLK, CEKA…SILN, IDKL…SAID, and NDKL…SLMG. Residues 194–196 and 236–248 each bind geranylgeranyl diphosphate; these read HAG and RPEKSSDVCYSWW. The Zn(2+) site is built by D242, C244, and H294.

Belongs to the protein prenyltransferase subunit beta family. In terms of assembly, heterodimer of an alpha and a beta subunit. It depends on Zn(2+) as a cofactor.

The catalysed reaction is geranylgeranyl diphosphate + L-cysteinyl-[protein] = S-geranylgeranyl-L-cysteinyl-[protein] + diphosphate. Its function is as follows. Catalyzes the transfer of a geranyl-geranyl moiety from geranyl-geranyl pyrophosphate to both cysteines in Rab proteins with an -XXCC, -XCXC and -CCXX C-terminal. The sequence is that of Probable geranylgeranyl transferase type-2 subunit beta (rabggtb) from Dictyostelium discoideum (Social amoeba).